A 168-amino-acid polypeptide reads, in one-letter code: Cyclic pyranopterin monophosphate synthase (168 aa).

Residues 75-77 (MCH) and 115-116 (ME) each bind substrate. D130 is an active-site residue.

It belongs to the MoaC family. In terms of assembly, homohexamer; trimer of dimers.

It carries out the reaction (8S)-3',8-cyclo-7,8-dihydroguanosine 5'-triphosphate = cyclic pyranopterin phosphate + diphosphate. It participates in cofactor biosynthesis; molybdopterin biosynthesis. Functionally, catalyzes the conversion of (8S)-3',8-cyclo-7,8-dihydroguanosine 5'-triphosphate to cyclic pyranopterin monophosphate (cPMP). This is Cyclic pyranopterin monophosphate synthase from Bacillus licheniformis (strain ATCC 14580 / DSM 13 / JCM 2505 / CCUG 7422 / NBRC 12200 / NCIMB 9375 / NCTC 10341 / NRRL NRS-1264 / Gibson 46).